The primary structure comprises 741 residues: NAD(P)H-quinone oxidoreductase subunit 5, chloroplastic (741 aa).

The next 16 helical transmembrane spans lie at 9-29 (WIIP…LLLF), 40-60 (WAFQ…NLSI), 89-109 (IDPL…MVLI), 125-145 (FAYM…SNLI), 147-167 (IYIF…FWFT), 185-205 (GDFG…SFEF), 219-239 (NEVN…GAIA), 258-278 (TPIS…FLVA), 283-303 (LFIV…ITVF), 327-347 (LGYM…FHLI), 354-374 (ALLF…VGYC), 396-416 (NSFL…CFWS), 425-445 (WLYS…TAFY), 549-569 (LFPI…GIPF), 605-625 (FFSV…YKPV), and 721-741 (YLFF…FFNL).

The protein belongs to the complex I subunit 5 family. As to quaternary structure, NDH is composed of at least 16 different subunits, 5 of which are encoded in the nucleus.

It is found in the plastid. The protein resides in the chloroplast thylakoid membrane. The enzyme catalyses a plastoquinone + NADH + (n+1) H(+)(in) = a plastoquinol + NAD(+) + n H(+)(out). It carries out the reaction a plastoquinone + NADPH + (n+1) H(+)(in) = a plastoquinol + NADP(+) + n H(+)(out). NDH shuttles electrons from NAD(P)H:plastoquinone, via FMN and iron-sulfur (Fe-S) centers, to quinones in the photosynthetic chain and possibly in a chloroplast respiratory chain. The immediate electron acceptor for the enzyme in this species is believed to be plastoquinone. Couples the redox reaction to proton translocation, and thus conserves the redox energy in a proton gradient. The polypeptide is NAD(P)H-quinone oxidoreductase subunit 5, chloroplastic (ndhF) (Cichorium intybus (Chicory)).